The chain runs to 319 residues: Acetyl esterase (319 aa).

Residues 91 to 93 (HGG) carry the Involved in the stabilization of the negatively charged intermediate by the formation of the oxyanion hole motif. Residues Ser-165, Asp-262, and His-292 contribute to the active site.

The protein belongs to the 'GDXG' lipolytic enzyme family. In terms of assembly, homodimer. Interacts with MalT and MelA.

It is found in the cytoplasm. In terms of biological role, displays esterase activity towards short chain fatty esters (acyl chain length of up to 8 carbons). Able to hydrolyze triacetylglycerol (triacetin) and tributyrylglycerol (tributyrin), but not trioleylglycerol (triolein) or cholesterol oleate. Negatively regulates MalT activity by antagonizing maltotriose binding. Inhibits MelA galactosidase activity. The polypeptide is Acetyl esterase (Escherichia coli O9:H4 (strain HS)).